Here is a 310-residue protein sequence, read N- to C-terminus: Putative carboxypeptidase SCO6489 (310 aa).

Residue serine 116 is the Nucleophile of the active site. Active-site charge relay system residues include glutamate 212 and histidine 277.

Belongs to the peptidase S66 family.

The chain is Putative carboxypeptidase SCO6489 from Streptomyces coelicolor (strain ATCC BAA-471 / A3(2) / M145).